The chain runs to 172 residues: C-phycocyanin beta subunit (172 aa).

An N4-methylasparagine modification is found at asparagine 72. Residues cysteine 82 and cysteine 153 each contribute to the (2R,3E)-phycocyanobilin site.

Belongs to the phycobiliprotein family. In terms of assembly, heterodimer of an alpha and a beta chain, which further assembles into trimers. The trimers assemble into hexamers, although these were not seen in the crystallographic studies. Part of 2 PBS rod complexes, the conventional CpcG-PBS rod and a photosystem I-specific CpcL-PBS rod, both of which include ferredoxin--NADP reductase (petH). Interacts with rod linker CpcC2 via the latter's N-terminal PBS-linker domain. Post-translationally, contains two covalently linked bilin chromophores.

Its subcellular location is the cellular thylakoid membrane. In terms of biological role, light-harvesting photosynthetic bile pigment-protein from the phycobiliprotein complex (phycobilisome, PBS). Phycocyanin is the major phycobiliprotein in the PBS rod. The polypeptide is C-phycocyanin beta subunit (cpcB) (Synechocystis sp. (strain ATCC 27184 / PCC 6803 / Kazusa)).